Consider the following 229-residue polypeptide: Uracil-DNA glycosylase (229 aa).

The active-site Proton acceptor is the aspartate 64.

Belongs to the uracil-DNA glycosylase (UDG) superfamily. UNG family.

The protein localises to the cytoplasm. The enzyme catalyses Hydrolyzes single-stranded DNA or mismatched double-stranded DNA and polynucleotides, releasing free uracil.. Its function is as follows. Excises uracil residues from the DNA which can arise as a result of misincorporation of dUMP residues by DNA polymerase or due to deamination of cytosine. The chain is Uracil-DNA glycosylase from Salmonella agona (strain SL483).